We begin with the raw amino-acid sequence, 231 residues long: Ribonuclease HII (231 aa).

Residues 23-214 form the RNase H type-2 domain; the sequence is GPVAGVDEAG…VAKAHREWAL (192 aa). A divalent metal cation contacts are provided by aspartate 29, glutamate 30, and aspartate 123.

The protein belongs to the RNase HII family. It depends on Mn(2+) as a cofactor. The cofactor is Mg(2+).

The protein resides in the cytoplasm. The enzyme catalyses Endonucleolytic cleavage to 5'-phosphomonoester.. Functionally, endonuclease that specifically degrades the RNA of RNA-DNA hybrids. This Corynebacterium efficiens (strain DSM 44549 / YS-314 / AJ 12310 / JCM 11189 / NBRC 100395) protein is Ribonuclease HII.